The primary structure comprises 249 residues: Phosphatidylserine decarboxylase proenzyme (249 aa).

Ser-208 (schiff-base intermediate with substrate; via pyruvic acid) is an active-site residue. The residue at position 208 (Ser-208) is a Pyruvic acid (Ser); by autocatalysis.

It belongs to the phosphatidylserine decarboxylase family. PSD-A subfamily. As to quaternary structure, heterodimer of a large membrane-associated beta subunit and a small pyruvoyl-containing alpha subunit. Requires pyruvate as cofactor. Post-translationally, is synthesized initially as an inactive proenzyme. Formation of the active enzyme involves a self-maturation process in which the active site pyruvoyl group is generated from an internal serine residue via an autocatalytic post-translational modification. Two non-identical subunits are generated from the proenzyme in this reaction, and the pyruvate is formed at the N-terminus of the alpha chain, which is derived from the carboxyl end of the proenzyme. The post-translation cleavage follows an unusual pathway, termed non-hydrolytic serinolysis, in which the side chain hydroxyl group of the serine supplies its oxygen atom to form the C-terminus of the beta chain, while the remainder of the serine residue undergoes an oxidative deamination to produce ammonia and the pyruvoyl prosthetic group on the alpha chain.

The protein localises to the cell membrane. The enzyme catalyses a 1,2-diacyl-sn-glycero-3-phospho-L-serine + H(+) = a 1,2-diacyl-sn-glycero-3-phosphoethanolamine + CO2. It participates in phospholipid metabolism; phosphatidylethanolamine biosynthesis; phosphatidylethanolamine from CDP-diacylglycerol: step 2/2. Its function is as follows. Catalyzes the formation of phosphatidylethanolamine (PtdEtn) from phosphatidylserine (PtdSer). This chain is Phosphatidylserine decarboxylase proenzyme, found in Erythrobacter litoralis (strain HTCC2594).